Here is a 340-residue protein sequence, read N- to C-terminus: Probable complex I intermediate-associated protein 30, mitochondrial (340 aa).

This sequence belongs to the CIA30 family.

The protein resides in the mitochondrion. Its function is as follows. Chaperone protein involved in the assembly of the mitochondrial NADH:ubiquinone oxidoreductase complex (complex I). Required for normal growth and reproduction. This chain is Probable complex I intermediate-associated protein 30, mitochondrial (nuaf-1), found in Caenorhabditis briggsae.